The primary structure comprises 379 residues: UDP-N-acetylglucosamine--N-acetylmuramyl-(pentapeptide) pyrophosphoryl-undecaprenol N-acetylglucosamine transferase (379 aa).

Residues 19-21 (TGG), asparagine 133, arginine 174, serine 207, isoleucine 261, and glutamine 306 contribute to the UDP-N-acetyl-alpha-D-glucosamine site.

The protein belongs to the glycosyltransferase 28 family. MurG subfamily.

It localises to the cell inner membrane. The catalysed reaction is di-trans,octa-cis-undecaprenyl diphospho-N-acetyl-alpha-D-muramoyl-L-alanyl-D-glutamyl-meso-2,6-diaminopimeloyl-D-alanyl-D-alanine + UDP-N-acetyl-alpha-D-glucosamine = di-trans,octa-cis-undecaprenyl diphospho-[N-acetyl-alpha-D-glucosaminyl-(1-&gt;4)]-N-acetyl-alpha-D-muramoyl-L-alanyl-D-glutamyl-meso-2,6-diaminopimeloyl-D-alanyl-D-alanine + UDP + H(+). It participates in cell wall biogenesis; peptidoglycan biosynthesis. In terms of biological role, cell wall formation. Catalyzes the transfer of a GlcNAc subunit on undecaprenyl-pyrophosphoryl-MurNAc-pentapeptide (lipid intermediate I) to form undecaprenyl-pyrophosphoryl-MurNAc-(pentapeptide)GlcNAc (lipid intermediate II). The sequence is that of UDP-N-acetylglucosamine--N-acetylmuramyl-(pentapeptide) pyrophosphoryl-undecaprenol N-acetylglucosamine transferase from Porphyromonas gingivalis (strain ATCC 33277 / DSM 20709 / CIP 103683 / JCM 12257 / NCTC 11834 / 2561).